Consider the following 458-residue polypeptide: UDP-N-acetylmuramate--L-alanine ligase (458 aa).

118–124 serves as a coordination point for ATP; sequence GTHGKTT.

Belongs to the MurCDEF family.

The protein resides in the cytoplasm. It carries out the reaction UDP-N-acetyl-alpha-D-muramate + L-alanine + ATP = UDP-N-acetyl-alpha-D-muramoyl-L-alanine + ADP + phosphate + H(+). It functions in the pathway cell wall biogenesis; peptidoglycan biosynthesis. Cell wall formation. This Clostridium botulinum (strain Kyoto / Type A2) protein is UDP-N-acetylmuramate--L-alanine ligase.